A 294-amino-acid chain; its full sequence is Eukaryotic translation initiation factor 3 subunit G (294 aa).

Over residues M1 to K22 the composition is skewed to basic and acidic residues. Disordered regions lie at residues M1–K42 and G164–D211. Residues S30 to K42 are compositionally biased toward polar residues. Residues G193–G205 are compositionally biased toward gly residues. Residues L214–K292 form the RRM domain.

It belongs to the eIF-3 subunit G family. As to quaternary structure, component of the eukaryotic translation initiation factor 3 (eIF-3) complex.

The protein localises to the cytoplasm. Functionally, RNA-binding component of the eukaryotic translation initiation factor 3 (eIF-3) complex, which is involved in protein synthesis of a specialized repertoire of mRNAs and, together with other initiation factors, stimulates binding of mRNA and methionyl-tRNAi to the 40S ribosome. The eIF-3 complex specifically targets and initiates translation of a subset of mRNAs involved in cell proliferation. This subunit can bind 18S rRNA. This chain is Eukaryotic translation initiation factor 3 subunit G, found in Yarrowia lipolytica (strain CLIB 122 / E 150) (Yeast).